Reading from the N-terminus, the 192-residue chain is Orotate phosphoribosyltransferase (192 aa).

A 5-phospho-alpha-D-ribose 1-diphosphate-binding site is contributed by glutamate 116–serine 124. The orotate site is built by threonine 120 and arginine 148.

It belongs to the purine/pyrimidine phosphoribosyltransferase family. PyrE subfamily. As to quaternary structure, homodimer. It depends on Mg(2+) as a cofactor.

The catalysed reaction is orotidine 5'-phosphate + diphosphate = orotate + 5-phospho-alpha-D-ribose 1-diphosphate. The protein operates within pyrimidine metabolism; UMP biosynthesis via de novo pathway; UMP from orotate: step 1/2. Functionally, catalyzes the transfer of a ribosyl phosphate group from 5-phosphoribose 1-diphosphate to orotate, leading to the formation of orotidine monophosphate (OMP). The protein is Orotate phosphoribosyltransferase of Brucella anthropi (strain ATCC 49188 / DSM 6882 / CCUG 24695 / JCM 21032 / LMG 3331 / NBRC 15819 / NCTC 12168 / Alc 37) (Ochrobactrum anthropi).